A 152-amino-acid polypeptide reads, in one-letter code: Protein E6 (152 aa).

2 zinc fingers span residues 33-69 (CIFC…CARC) and 106-142 (CYMC…CQYC).

The protein belongs to the papillomaviridae E6 protein family. In terms of assembly, forms homodimers. Interacts with ubiquitin-protein ligase UBE3A/E6-AP; this interaction stimulates UBE3A ubiquitin activity. Interacts with host TP53 and EP300; this interaction inhibits TP53 activity.

The protein localises to the host cytoplasm. It is found in the host nucleus. Its function is as follows. Plays a major role in the induction and maintenance of cellular transformation. E6 associates with host UBE3A/E6-AP ubiquitin-protein ligase and modulates its activity. Sequesters tumor suppressor TP53 in the host cytoplasm and modulates its activity by interacting with host EP300 that results in the reduction of TP53 acetylation and activation. In turn, apoptosis induced by DNA damage is inhibited. E6 also protects host keratinocytes from apoptosis by mediating the degradation of host BAK1. May also inhibit host immune response. This chain is Protein E6, found in Human papillomavirus 3.